A 213-amino-acid chain; its full sequence is ATP synthase peripheral stalk subunit OSCP, mitochondrial (213 aa).

Residues 1 to 23 (MAAPAVSGLSRQVRCFSTSVVRP) constitute a mitochondrion transit peptide. The SIFI-degron motif lies at 5–23 (AVSGLSRQVRCFSTSVVRP). N6-acetyllysine is present on residues Lys54, Lys60, Lys70, and Lys73. Lys90 carries the post-translational modification N6-succinyllysine. N6-acetyllysine; alternate occurs at positions 158 and 162. 2 positions are modified to N6-succinyllysine; alternate: Lys158 and Lys162. Residues Lys172, Lys176, and Lys192 each carry the N6-acetyllysine modification. Residue Lys199 is modified to N6-succinyllysine.

It belongs to the ATPase delta chain family. In terms of assembly, component of the ATP synthase complex composed at least of ATP5F1A/subunit alpha, ATP5F1B/subunit beta, ATP5MC1/subunit c (homooctomer), MT-ATP6/subunit a, MT-ATP8/subunit 8, ATP5ME/subunit e, ATP5MF/subunit f, ATP5MG/subunit g, ATP5MK/subunit k, ATP5MJ/subunit j, ATP5F1C/subunit gamma, ATP5F1D/subunit delta, ATP5F1E/subunit epsilon, ATP5PF/subunit F6, ATP5PB/subunit b, ATP5PD/subunit d, ATP5PO/subunit OSCP. ATP synthase complex consists of a soluble F(1) head domain (subunits alpha(3) and beta(3)) - the catalytic core - and a membrane F(0) domain - the membrane proton channel (subunits c, a, 8, e, f, g, k and j). These two domains are linked by a central stalk (subunits gamma, delta, and epsilon) rotating inside the F1 region and a stationary peripheral stalk (subunits F6, b, d, and OSCP). Acetylation at Lys-162 decreases ATP production. Deacetylated by SIRT3. Post-translationally, in response to mitochondrial stress, the precursor protein is ubiquitinated by the SIFI complex in the cytoplasm before mitochondrial import, leading to its degradation. Within the SIFI complex, UBR4 initiates ubiquitin chain that are further elongated or branched by KCMF1.

It localises to the mitochondrion. The protein localises to the mitochondrion inner membrane. Subunit OSCP, of the mitochondrial membrane ATP synthase complex (F(1)F(0) ATP synthase or Complex V) that produces ATP from ADP in the presence of a proton gradient across the membrane which is generated by electron transport complexes of the respiratory chain. ATP synthase complex consist of a soluble F(1) head domain - the catalytic core - and a membrane F(1) domain - the membrane proton channel. These two domains are linked by a central stalk rotating inside the F(1) region and a stationary peripheral stalk. During catalysis, ATP synthesis in the catalytic domain of F(1) is coupled via a rotary mechanism of the central stalk subunits to proton translocation. In vivo, can only synthesize ATP although its ATP hydrolase activity can be activated artificially in vitro. Part of the complex F(0) domain. Part of the complex F(0) domain and the peripheric stalk, which acts as a stator to hold the catalytic alpha(3)beta(3) subcomplex and subunit a/ATP6 static relative to the rotary elements. The protein is ATP synthase peripheral stalk subunit OSCP, mitochondrial of Homo sapiens (Human).